Consider the following 579-residue polypeptide: UPF0329 protein ECU06_1620 (579 aa).

2 disordered regions span residues E325–A360 and A370–K389. Residues K329–S338 are compositionally biased toward basic residues. Acidic residues predominate over residues K345 to A360.

This sequence belongs to the UPF0329 family.

This Encephalitozoon cuniculi (strain GB-M1) (Microsporidian parasite) protein is UPF0329 protein ECU06_1620.